Consider the following 212-residue polypeptide: MGPYLPAILRPIGRYATLYNVPRVAGQLRCYAADAKDAADAQGESAADPRVAELEKQLADKSKEAADLKDRLLRSVADFRNLQEVTRRDVQKARDFALQRFSKDLLESLDNFGHALGAVSPEALQRSPEIADLHAGVRLTRDVFEKTLLKHGIAPIDALGQPFDPNLHEATFELPQPDKTPGTVFHVQQPGYTLNGRVIRPAKVGVVKDPDA.

This sequence belongs to the GrpE family. In terms of assembly, component of the PAM complex, at least composed of mtHsp70, MGE1, TIM44, PAM16, PAM17 and PAM18.

It localises to the mitochondrion matrix. Essential component of the PAM complex, a complex required for the translocation of transit peptide-containing proteins from the inner membrane into the mitochondrial matrix in an ATP-dependent manner. Seems to control the nucleotide-dependent binding of SSC1 to substrate proteins. The chain is GrpE protein homolog, mitochondrial (mge1) from Eremothecium gossypii (strain ATCC 10895 / CBS 109.51 / FGSC 9923 / NRRL Y-1056) (Yeast).